The chain runs to 1097 residues: DNA-directed RNA polymerase subunit beta (1097 aa).

The disordered stretch occupies residues 1072–1097 (QDVNPRRSTPSRPTYESLGVADYDED).

Belongs to the RNA polymerase beta chain family. As to quaternary structure, in cyanobacteria the RNAP catalytic core is composed of 2 alpha, 1 beta, 1 beta', 1 gamma and 1 omega subunit. When a sigma factor is associated with the core the holoenzyme is formed, which can initiate transcription.

It catalyses the reaction RNA(n) + a ribonucleoside 5'-triphosphate = RNA(n+1) + diphosphate. In terms of biological role, DNA-dependent RNA polymerase catalyzes the transcription of DNA into RNA using the four ribonucleoside triphosphates as substrates. The chain is DNA-directed RNA polymerase subunit beta from Synechococcus sp. (strain CC9605).